The primary structure comprises 251 residues: Large ribosomal subunit protein uL16m (251 aa).

The transit peptide at 1-29 directs the protein to the mitochondrion; that stretch reads MWRLLTRVPAPLLRMHFSDSWAALPTSAG.

This sequence belongs to the universal ribosomal protein uL16 family. As to quaternary structure, component of the mitochondrial ribosome large subunit (39S) which comprises a 16S rRNA and about 50 distinct proteins.

Its subcellular location is the mitochondrion. The polypeptide is Large ribosomal subunit protein uL16m (Mrpl16) (Mus musculus (Mouse)).